We begin with the raw amino-acid sequence, 184 residues long: Muscle-specific protein 20 (184 aa).

The Calponin-homology (CH) domain maps to 17-122 (PEMDKEAQEW…NTIFALGRAT (106 aa)). The Calponin-like repeat unit spans residues 157-181 (VGLQAGSNKGATQAGQNLGAGRKIL).

It belongs to the calponin family. Found in synchronous muscle; not found in asynchronous indirect flight muscle.

This is Muscle-specific protein 20 (Mp20) from Drosophila melanogaster (Fruit fly).